We begin with the raw amino-acid sequence, 248 residues long: Aliphatic sulfonates import ATP-binding protein SsuB 2 (248 aa).

The 217-residue stretch at 14–230 folds into the ABC transporter domain; the sequence is VRVESLVRSF…DHGHRRFGEI (217 aa). 46-53 is a binding site for ATP; sequence GRSGSGKS.

It belongs to the ABC transporter superfamily. Aliphatic sulfonates importer (TC 3.A.1.17.2) family. The complex is composed of two ATP-binding proteins (SsuB), two transmembrane proteins (SsuC) and a solute-binding protein (SsuA).

It is found in the cell inner membrane. It carries out the reaction ATP + H2O + aliphatic sulfonate-[sulfonate-binding protein]Side 1 = ADP + phosphate + aliphatic sulfonateSide 2 + [sulfonate-binding protein]Side 1.. In terms of biological role, part of the ABC transporter complex SsuABC involved in aliphatic sulfonates import. Responsible for energy coupling to the transport system. The polypeptide is Aliphatic sulfonates import ATP-binding protein SsuB 2 (Mesorhizobium japonicum (strain LMG 29417 / CECT 9101 / MAFF 303099) (Mesorhizobium loti (strain MAFF 303099))).